The primary structure comprises 88 residues: Putative defensin-like protein 256 (88 aa).

The first 25 residues, 1–25 (MKSSIFFKLLLLVSLLVVIFRQSYA), serve as a signal peptide directing secretion. 3 disulfide bridges follow: Cys30/Cys46, Cys36/Cys53, and Cys40/Cys55.

It belongs to the DEFL family.

The protein resides in the secreted. This chain is Putative defensin-like protein 256, found in Arabidopsis thaliana (Mouse-ear cress).